Here is a 241-residue protein sequence, read N- to C-terminus: Adapter protein MecA (241 aa).

The disordered stretch occupies residues 77 to 102; sequence KNTDEDDVADESQGDASVDSEHPDQV. Over residues 80–89 the composition is skewed to acidic residues; it reads DEDDVADESQ.

The protein belongs to the MecA family. Homodimer.

In terms of biological role, enables the recognition and targeting of unfolded and aggregated proteins to the ClpC protease or to other proteins involved in proteolysis. This is Adapter protein MecA from Levilactobacillus brevis (strain ATCC 367 / BCRC 12310 / CIP 105137 / JCM 1170 / LMG 11437 / NCIMB 947 / NCTC 947) (Lactobacillus brevis).